Here is a 383-residue protein sequence, read N- to C-terminus: Succinyl-diaminopimelate desuccinylase (383 aa).

Position 73 (His73) interacts with Zn(2+). Residue Asp75 is part of the active site. Asp107 is a binding site for Zn(2+). The Proton acceptor role is filled by Glu141. Zn(2+) is bound by residues Glu142, Glu170, and His356.

The protein belongs to the peptidase M20A family. DapE subfamily. Homodimer. It depends on Zn(2+) as a cofactor. Co(2+) serves as cofactor.

The catalysed reaction is N-succinyl-(2S,6S)-2,6-diaminopimelate + H2O = (2S,6S)-2,6-diaminopimelate + succinate. The protein operates within amino-acid biosynthesis; L-lysine biosynthesis via DAP pathway; LL-2,6-diaminopimelate from (S)-tetrahydrodipicolinate (succinylase route): step 3/3. Functionally, catalyzes the hydrolysis of N-succinyl-L,L-diaminopimelic acid (SDAP), forming succinate and LL-2,6-diaminopimelate (DAP), an intermediate involved in the bacterial biosynthesis of lysine and meso-diaminopimelic acid, an essential component of bacterial cell walls. In Pseudomonas aeruginosa (strain ATCC 15692 / DSM 22644 / CIP 104116 / JCM 14847 / LMG 12228 / 1C / PRS 101 / PAO1), this protein is Succinyl-diaminopimelate desuccinylase.